The following is a 460-amino-acid chain: Inactive ubiquitin carboxyl-terminal hydrolase MINDY-4B (460 aa).

Positions 41–76 are disordered; that stretch reads TNNSTPQNHEGNHTSADENEDGTGLSQPKGQGHLPS.

It belongs to the MINDY deubiquitinase family. FAM188 subfamily.

This Homo sapiens (Human) protein is Inactive ubiquitin carboxyl-terminal hydrolase MINDY-4B.